Consider the following 325-residue polypeptide: Phospho-N-acetylmuramoyl-pentapeptide-transferase (325 aa).

A run of 10 helical transmembrane segments spans residues 3 to 23 (LMIY…PILI), 48 to 68 (GTPT…VFVV), 79 to 99 (AIFA…LKII), 106 to 126 (LKAY…GFYA), 136 to 156 (IIVP…PFII), 174 to 194 (GLAT…SYAT), 199 to 219 (LAVF…YNAY), 223 to 243 (VFMG…VAMM), 246 to 266 (LPLI…SVIL), and 298 to 318 (IVSI…LSLI).

The protein belongs to the glycosyltransferase 4 family. MraY subfamily. Mg(2+) is required as a cofactor.

It localises to the cell membrane. The enzyme catalyses UDP-N-acetyl-alpha-D-muramoyl-L-alanyl-gamma-D-glutamyl-meso-2,6-diaminopimeloyl-D-alanyl-D-alanine + di-trans,octa-cis-undecaprenyl phosphate = di-trans,octa-cis-undecaprenyl diphospho-N-acetyl-alpha-D-muramoyl-L-alanyl-D-glutamyl-meso-2,6-diaminopimeloyl-D-alanyl-D-alanine + UMP. It functions in the pathway cell wall biogenesis; peptidoglycan biosynthesis. Catalyzes the initial step of the lipid cycle reactions in the biosynthesis of the cell wall peptidoglycan: transfers peptidoglycan precursor phospho-MurNAc-pentapeptide from UDP-MurNAc-pentapeptide onto the lipid carrier undecaprenyl phosphate, yielding undecaprenyl-pyrophosphoryl-MurNAc-pentapeptide, known as lipid I. This Clostridium novyi (strain NT) protein is Phospho-N-acetylmuramoyl-pentapeptide-transferase.